A 407-amino-acid chain; its full sequence is uncharacterized protein (407 aa).

Residues 1–27 (MRILAMTRAHNAGRTLAATLDSLAVFS) form the signal peptide.

This is an uncharacterized protein from Mycobacterium bovis (strain ATCC BAA-935 / AF2122/97).